The chain runs to 338 residues: Nucleoid-associated protein CGSHiGG_07705 (338 aa).

Belongs to the YejK family.

It is found in the cytoplasm. Its subcellular location is the nucleoid. The chain is Nucleoid-associated protein CGSHiGG_07705 from Haemophilus influenzae (strain PittGG).